Consider the following 372-residue polypeptide: Cytochrome b (372 aa).

A run of 4 helical transmembrane segments spans residues 25 to 45 (FGSM…FLAI), 69 to 90 (WMMQ…YIHI), 105 to 125 (WLSG…GYVL), and 170 to 190 (FFAL…IHIM). Positions 75 and 89 each coordinate heme b. Positions 174 and 188 each coordinate heme b. Residue histidine 193 participates in a ubiquinone binding. 4 helical membrane passes run 218-238 (HKDM…MSFM), 280-300 (LGGT…PFTH), 312-332 (LMQF…WAAT), and 339-358 (FTTI…IMNP).

The protein belongs to the cytochrome b family. The cytochrome bc1 complex contains 3 respiratory subunits (MT-CYB, CYC1 and UQCRFS1), 2 core proteins (UQCRC1 and UQCRC2) and probably 6 low-molecular weight proteins. The cofactor is heme b.

Its subcellular location is the mitochondrion inner membrane. Its function is as follows. Component of the ubiquinol-cytochrome c reductase complex (complex III or cytochrome b-c1 complex) that is part of the mitochondrial respiratory chain. The b-c1 complex mediates electron transfer from ubiquinol to cytochrome c. Contributes to the generation of a proton gradient across the mitochondrial membrane that is then used for ATP synthesis. The polypeptide is Cytochrome b (MT-CYB) (Pantherophis obsoletus (Black ratsnake)).